The sequence spans 76 residues: Large ribosomal subunit protein eL20 (76 aa).

The protein belongs to the eukaryotic ribosomal protein eL20 family. As to quaternary structure, part of the 50S ribosomal subunit. Binds 23S rRNA.

The polypeptide is Large ribosomal subunit protein eL20 (Methanococcus maripaludis (strain DSM 14266 / JCM 13030 / NBRC 101832 / S2 / LL)).